The primary structure comprises 377 residues: Cobalt-precorrin-5B C(1)-methyltransferase (377 aa).

The protein belongs to the CbiD family.

It catalyses the reaction Co-precorrin-5B + S-adenosyl-L-methionine = Co-precorrin-6A + S-adenosyl-L-homocysteine. It participates in cofactor biosynthesis; adenosylcobalamin biosynthesis; cob(II)yrinate a,c-diamide from sirohydrochlorin (anaerobic route): step 6/10. Functionally, catalyzes the methylation of C-1 in cobalt-precorrin-5B to form cobalt-precorrin-6A. The sequence is that of Cobalt-precorrin-5B C(1)-methyltransferase from Alkaliphilus metalliredigens (strain QYMF).